The chain runs to 460 residues: Argininosuccinate lyase (460 aa).

Belongs to the lyase 1 family. Argininosuccinate lyase subfamily.

The protein resides in the cytoplasm. The catalysed reaction is 2-(N(omega)-L-arginino)succinate = fumarate + L-arginine. Its pathway is amino-acid biosynthesis; L-arginine biosynthesis; L-arginine from L-ornithine and carbamoyl phosphate: step 3/3. The sequence is that of Argininosuccinate lyase from Buchnera aphidicola subsp. Cinara cedri (strain Cc).